The primary structure comprises 428 residues: Enolase (428 aa).

(2R)-2-phosphoglycerate is bound at residue glutamine 162. The active-site Proton donor is glutamate 204. Mg(2+) is bound by residues aspartate 241, glutamate 282, and aspartate 309. (2R)-2-phosphoglycerate is bound by residues lysine 334, arginine 363, serine 364, and lysine 385. The Proton acceptor role is filled by lysine 334.

This sequence belongs to the enolase family. The cofactor is Mg(2+).

It is found in the cytoplasm. Its subcellular location is the secreted. The protein resides in the cell surface. It catalyses the reaction (2R)-2-phosphoglycerate = phosphoenolpyruvate + H2O. The protein operates within carbohydrate degradation; glycolysis; pyruvate from D-glyceraldehyde 3-phosphate: step 4/5. In terms of biological role, catalyzes the reversible conversion of 2-phosphoglycerate (2-PG) into phosphoenolpyruvate (PEP). It is essential for the degradation of carbohydrates via glycolysis. This is Enolase from Mycobacterium ulcerans (strain Agy99).